Consider the following 3432-residue polypeptide: Hybrid signal transduction histidine kinase G (3432 aa).

3 stretches are compositionally biased toward low complexity: residues 44–68 (HFSNSVLNQTTTTTTTTTTTTTTTN), 76–90 (SQLQAQLQSQSQQNN), and 126–145 (QPQQQQQQQASNKSKLSQKQ). 2 disordered regions span residues 44-109 (HFSN…TNSS) and 124-240 (DDQP…HNIN). Residues 146–157 (TSQLNISGNNSG) show a composition bias toward polar residues. 2 stretches are compositionally biased toward low complexity: residues 165 to 177 (TISNSNNSINFIH) and 187 to 238 (KTPI…NNHN). The Protein kinase domain occupies 263–792 (LSFKHGYNSG…YGLKKDLEMF (530 aa)). ATP-binding positions include 269–277 (YNSGLGGNF) and lysine 305. Residues 399 to 419 (NNNNNNNNSYNNNYNNNNNNN) are compositionally biased toward low complexity. 2 disordered regions span residues 399-426 (NNNNNNNNSYNNNYNNNNNNNGQVTSPI) and 443-542 (FQLN…STPL). A compositionally biased stretch (polar residues) spans 443 to 467 (FQLNSSTNSTGSPLIITSQPMPFQL). The segment covering 468–479 (NSNSNTTASSSS) has biased composition (low complexity). A compositionally biased stretch (polar residues) spans 480-490 (PITHSNLNTAI). A compositionally biased stretch (low complexity) spans 491–508 (TSTTTSNSNSNNNSNNNN). A compositionally biased stretch (gly residues) spans 509 to 525 (SGGGGGGGGGGGGGGGT). Aspartate 585 (proton acceptor; for protein kinase activity) is an active-site residue. Positions 863–1121 (GKEFIIVSGL…TMKIVLKNLD (259 aa)) are AAA. 871–878 (GLSGVGKT) contacts ATP. Disordered regions lie at residues 1040–1077 (NNFSINNNNNNNNGCNNNNNNNNNNINNNNNNNNNNNI) and 1261–1290 (TTTTNNNTTNNTNNNNTNNNNNNTNGNNSD). The span at 1261 to 1288 (TTTTNNNTTNNTNNNNTNNNNNNTNGNN) shows a compositional bias: low complexity. A run of 2 helical transmembrane segments spans residues 1567-1587 (VMVIMMPSLYLNNLNVLTLLL) and 1599-1619 (ISSWSSTAFAMFGMVVSIGHF). A TPR repeat occupies 1965-1998 (SQLMLAKAEFERINGNFEQAMEYFSEAISLAQQF). Disordered stretches follow at residues 2071 to 2095 (EYSNNNNNNNSNNNNNNANQSQASI) and 2299 to 2349 (GYNN…NNNK). The segment covering 2073-2095 (SNNNNNNNSNNNNNNANQSQASI) has biased composition (low complexity). One can recognise a GAF domain in the interval 2215-2465 (YFDRLLKRLM…SNARLFIKVN (251 aa)). Residues 2491–2769 (NMSHEMRTPL…TFHFCVELGK (279 aa)) form the Histidine kinase domain. Histidine 2494 carries the phosphohistidine; by autocatalysis modification. The segment covering 2637-2648 (TTTNNKKQLNTD) has biased composition (low complexity). Disordered stretches follow at residues 2637–2673 (TTTNNKKQLNTDNDGDDDDDDDNENLDENNEDTSIDL), 2785–2815 (LLNNNNNNNNNNNNNNNNNNNNNNNNNNNNN), 2917–3030 (LSPK…NNNS), 3134–3160 (NNNINNINNNNNKSNSPIPEDSKHSQY), and 3247–3281 (NSISTTSHSSTSTSSSSSSSSSSSSSLSSTTTITT). Positions 2649–2673 (NDGDDDDDDDNENLDENNEDTSIDL) are enriched in acidic residues. Low complexity-rich tracts occupy residues 2787-2815 (NNNNNNNNNNNNNNNNNNNNNNNNNNNNN), 2935-3029 (LSSS…HNNN), and 3134-3145 (NNNINNINNNNN). The region spanning 3305 to 3424 (KILIVEDNEM…DLRYVINRYG (120 aa)) is the Response regulatory domain. A 4-aspartylphosphate modification is found at aspartate 3356.

It belongs to the protein kinase superfamily. Ser/Thr protein kinase family. Post-translationally, activation probably requires transfer of a phosphate group between a histidine in the kinase core (transmitter) domain and an aspartate of the receiver domain.

It localises to the membrane. The enzyme catalyses ATP + protein L-histidine = ADP + protein N-phospho-L-histidine.. It catalyses the reaction L-seryl-[protein] + ATP = O-phospho-L-seryl-[protein] + ADP + H(+). It carries out the reaction L-threonyl-[protein] + ATP = O-phospho-L-threonyl-[protein] + ADP + H(+). Acts as a receptor histidine kinase for a signal transduction pathway. This protein undergoes an ATP-dependent autophosphorylation at a conserved histidine residue in the kinase core, and a phosphoryl group is then transferred to a conserved aspartate residue in the receiver domain. The polypeptide is Hybrid signal transduction histidine kinase G (dhkG) (Dictyostelium discoideum (Social amoeba)).